Consider the following 196-residue polypeptide: Phosphoheptose isomerase (196 aa).

The SIS domain occupies 36–195; it reads VIQAYKLGKK…EKELFGEKVD (160 aa). A substrate-binding site is contributed by 51–53; that stretch reads NGG. Zn(2+) contacts are provided by H60 and E64. Residues E64, 93 to 94, 119 to 121, S124, and Q171 each bind substrate; these read ND and STS. Residues Q171 and H179 each coordinate Zn(2+).

It belongs to the SIS family. GmhA subfamily. Zn(2+) is required as a cofactor.

Its subcellular location is the cytoplasm. The catalysed reaction is 2 D-sedoheptulose 7-phosphate = D-glycero-alpha-D-manno-heptose 7-phosphate + D-glycero-beta-D-manno-heptose 7-phosphate. It functions in the pathway carbohydrate biosynthesis; D-glycero-D-manno-heptose 7-phosphate biosynthesis; D-glycero-alpha-D-manno-heptose 7-phosphate and D-glycero-beta-D-manno-heptose 7-phosphate from sedoheptulose 7-phosphate: step 1/1. Its function is as follows. Catalyzes the isomerization of sedoheptulose 7-phosphate in D-glycero-D-manno-heptose 7-phosphate. The protein is Phosphoheptose isomerase of Clostridium acetobutylicum (strain ATCC 824 / DSM 792 / JCM 1419 / IAM 19013 / LMG 5710 / NBRC 13948 / NRRL B-527 / VKM B-1787 / 2291 / W).